The sequence spans 443 residues: MKIGIINTKIRTVFSAFACMIAASLVCTMPARAVVEININKGVIEPLPIAITDFLSADQLGPNITSVIAADLERSGLFAPIDKGAFIEKISNPDAAPRFEDWKVINAQALVTGRITKQPDGRLKAEFRLWDTFGGQQMIGQQFFTTPDNWRRVAHIIADAIYERLTGEKGYFDTRVVFVDESGPAQKRVKRLAIMDQDGANVRYISDGRAISLTPRFSPNRQEVTYMSFEGGSPKVYLLQLETGQRELVGNFPGMTIAPRFSPDGQKVVMSLLQDDGSANIYTMDLRNRSTTRLTNSQAIDTSASYSPDGSQIVFSSDRGGRPQLYVMGADGSNPRRISAGDGSYSTPVWSPRGDLIAFTKQSQGQFSIGVMKTDGSGERLLTSGFHNEGPTWAPNGRVLMFFRKAAGAGGPKLFTIDLTGRNERQIQTPNFASDPAWSPLLE.

The signal sequence occupies residues 1 to 33; sequence MKIGIINTKIRTVFSAFACMIAASLVCTMPARA.

This sequence belongs to the TolB family. The Tol-Pal system is composed of five core proteins: the inner membrane proteins TolA, TolQ and TolR, the periplasmic protein TolB and the outer membrane protein Pal. They form a network linking the inner and outer membranes and the peptidoglycan layer.

Its subcellular location is the periplasm. Functionally, part of the Tol-Pal system, which plays a role in outer membrane invagination during cell division and is important for maintaining outer membrane integrity. The polypeptide is Tol-Pal system protein TolB (Brucella anthropi (strain ATCC 49188 / DSM 6882 / CCUG 24695 / JCM 21032 / LMG 3331 / NBRC 15819 / NCTC 12168 / Alc 37) (Ochrobactrum anthropi)).